The chain runs to 178 residues: ATP synthase subunit b (178 aa).

A helical transmembrane segment spans residues 19 to 39; sequence ITGIGFVILLFIAIKYIVPAF.

This sequence belongs to the ATPase B chain family. F-type ATPases have 2 components, F(1) - the catalytic core - and F(0) - the membrane proton channel. F(1) has five subunits: alpha(3), beta(3), gamma(1), delta(1), epsilon(1). F(0) has three main subunits: a(1), b(2) and c(10-14). The alpha and beta chains form an alternating ring which encloses part of the gamma chain. F(1) is attached to F(0) by a central stalk formed by the gamma and epsilon chains, while a peripheral stalk is formed by the delta and b chains.

The protein localises to the cell membrane. In terms of biological role, f(1)F(0) ATP synthase produces ATP from ADP in the presence of a proton or sodium gradient. F-type ATPases consist of two structural domains, F(1) containing the extramembraneous catalytic core and F(0) containing the membrane proton channel, linked together by a central stalk and a peripheral stalk. During catalysis, ATP synthesis in the catalytic domain of F(1) is coupled via a rotary mechanism of the central stalk subunits to proton translocation. Functionally, component of the F(0) channel, it forms part of the peripheral stalk, linking F(1) to F(0). This chain is ATP synthase subunit b, found in Kocuria rhizophila (strain ATCC 9341 / DSM 348 / NBRC 103217 / DC2201).